The primary structure comprises 966 residues: Alpha-1,4 glucan phosphorylase L-1 isozyme, chloroplastic/amyloplastic (966 aa).

The transit peptide at 1–50 (MATANGAHLFNHYSSNSRFIHFTSRNTSSKLFLTKTSHFRRPKRCFHVNN) directs the protein to the chloroplast. Lys-812 carries the post-translational modification N6-(pyridoxal phosphate)lysine.

The protein belongs to the glycogen phosphorylase family. It depends on pyridoxal 5'-phosphate as a cofactor. In terms of tissue distribution, tuber.

The protein resides in the plastid. It localises to the chloroplast. It is found in the amyloplast. The enzyme catalyses [(1-&gt;4)-alpha-D-glucosyl](n) + phosphate = [(1-&gt;4)-alpha-D-glucosyl](n-1) + alpha-D-glucose 1-phosphate. Phosphorylase is an important allosteric enzyme in carbohydrate metabolism. Enzymes from different sources differ in their regulatory mechanisms and in their natural substrates. However, all known phosphorylases share catalytic and structural properties. The chain is Alpha-1,4 glucan phosphorylase L-1 isozyme, chloroplastic/amyloplastic from Solanum tuberosum (Potato).